We begin with the raw amino-acid sequence, 359 residues long: Fructose-bisphosphate aldolase class 2 (359 aa).

D-glyceraldehyde 3-phosphate is bound at residue Ser50. The Proton donor role is filled by Asp83. Residues His84, Asp105, Glu142, and His198 each contribute to the Zn(2+) site. Gly199 lines the dihydroxyacetone phosphate pocket. His232 provides a ligand contact to Zn(2+). Residues 233–235 (GSS) and 275–278 (NIDT) each bind dihydroxyacetone phosphate.

It belongs to the class II fructose-bisphosphate aldolase family. It depends on Zn(2+) as a cofactor.

It catalyses the reaction beta-D-fructose 1,6-bisphosphate = D-glyceraldehyde 3-phosphate + dihydroxyacetone phosphate. It participates in carbohydrate degradation; glycolysis; D-glyceraldehyde 3-phosphate and glycerone phosphate from D-glucose: step 4/4. In terms of biological role, catalyzes the aldol condensation of dihydroxyacetone phosphate (DHAP or glycerone-phosphate) with glyceraldehyde 3-phosphate (G3P) to form fructose 1,6-bisphosphate (FBP) in gluconeogenesis and the reverse reaction in glycolysis. The protein is Fructose-bisphosphate aldolase class 2 (fbaA) of Synechocystis sp. (strain ATCC 27184 / PCC 6803 / Kazusa).